The following is a 44-amino-acid chain: GGKCTVDWGGQGGGRRLPSPLFCCYKPTRICYLNQETCETETCP.

Disulfide bonds. In terms of tissue distribution, expressed in flowers but not in leaves, seeds or roots (at protein level).

In terms of biological role, antimicrobial peptide. Active against fungal species B.cinerea (IC(50)=5.2 uM), A.niger (IC(50)=2.6 uM) and B.sorokinina (IC(50)=5.2 uM) but not against F.oxysporum, F.graminearum and P.debaryanum at concentrations below 10 uM. Inhibits growth of P.infestans at concentration between 1.3 uM and 5.2 uM. Active against bacterial species P.syringae, B.subtilis, X.campestris and C.michiganense. The protein is Antimicrobial peptide 2 of Taraxacum officinale (Common dandelion).